The chain runs to 173 residues: Translation initiation factor IF-3 (173 aa).

It belongs to the IF-3 family. In terms of assembly, monomer.

The protein localises to the cytoplasm. Its function is as follows. IF-3 binds to the 30S ribosomal subunit and shifts the equilibrium between 70S ribosomes and their 50S and 30S subunits in favor of the free subunits, thus enhancing the availability of 30S subunits on which protein synthesis initiation begins. This chain is Translation initiation factor IF-3, found in Methylobacterium sp. (strain 4-46).